A 526-amino-acid chain; its full sequence is MPSLRRLLPFLAAGSAALASQDTFQGKCTGFADKINLPDVRVNFVNYVPGGTNLSLPDNPTSCGTTSQVVSEDVCRIAMAVATSNSSEITLEAWLPQNYTGRFLSTGNGGLSGCIQYYDLAYTSGLGFATVGANSGHNGTSGEPFYHHPEVLEDFVHRSVHTGVVVGKQLTKLFYEEGFKKSYYLGCSTGGRQGFKSVQKYPNDFDGVVAGAPAFNMINLMSWSAHFYSITGPVGSDTYLSPDLWNITHKEILRQCDGIDGAEDGIIEDPSLCSPVLEAIICKPGQNTTECLTGKQAHTVREIFSPLYGVNGTLLYPRMQPGSEVMASSIMYNGQPFQYSADWYRYVVYENPNWDATKFSVRDAAVALKQNPFNLQTWDADISSFRKAGGKVLTYHGLMDQLISSENSKLYYARVAETMNVPPEELDEFYRFFQISGMAHCSGGDGAYGIGNQLVTYNDANPENNVLMAMVQWVEKGIAPETIRGAKFTNGTGSAVEYTRKHCRYPRRNVYKGPGNYTDENAWQCV.

The signal sequence occupies residues 1-19 (MPSLRRLLPFLAAGSAALA). 2 disulfide bridges follow: Cys-28–Cys-75 and Cys-63–Cys-114. N-linked (GlcNAc...) asparagine glycosylation is found at Asn-53, Asn-85, Asn-98, and Asn-138. Disulfide bonds link Cys-187/Cys-441, Cys-256/Cys-273, and Cys-282/Cys-291. Ser-188 serves as the catalytic Acyl-ester intermediate. N-linked (GlcNAc...) asparagine glycosylation is present at Asn-246. 5 residues coordinate Ca(2+): Asp-257, Asp-260, Ala-262, Asp-264, and Ile-266. 2 N-linked (GlcNAc...) asparagine glycosylation sites follow: Asn-287 and Asn-311. Catalysis depends on charge relay system residues Asp-400 and His-440. N-linked (GlcNAc...) asparagine glycans are attached at residues Asn-490 and Asn-516. Cys-503 and Cys-525 are joined by a disulfide.

Belongs to the tannase family.

It is found in the secreted. It carries out the reaction feruloyl-polysaccharide + H2O = ferulate + polysaccharide.. In terms of biological role, involved in degradation of plant cell walls. Hydrolyzes the feruloyl-arabinose ester bond in arabinoxylans as well as the feruloyl-galactose and feruloyl-arabinose ester bonds in pectin. This is Probable feruloyl esterase B-1 (faeB-1) from Aspergillus flavus (strain ATCC 200026 / FGSC A1120 / IAM 13836 / NRRL 3357 / JCM 12722 / SRRC 167).